The chain runs to 310 residues: Ribosomal RNA small subunit methyltransferase H (310 aa).

S-adenosyl-L-methionine contacts are provided by residues 40-42, Asp-59, Phe-89, Asp-104, and Gln-111; that span reads GGH.

It belongs to the methyltransferase superfamily. RsmH family.

The protein localises to the cytoplasm. It catalyses the reaction cytidine(1402) in 16S rRNA + S-adenosyl-L-methionine = N(4)-methylcytidine(1402) in 16S rRNA + S-adenosyl-L-homocysteine + H(+). Its function is as follows. Specifically methylates the N4 position of cytidine in position 1402 (C1402) of 16S rRNA. The polypeptide is Ribosomal RNA small subunit methyltransferase H (Amoebophilus asiaticus (strain 5a2)).